Consider the following 308-residue polypeptide: Maspardin (308 aa).

The 73-residue stretch at 87–159 (FCDGFRKLLD…NSFWLMPAFM (73 aa)) folds into the AB hydrolase-1 domain. A Phosphoserine modification is found at Ser-304.

It belongs to the AB hydrolase superfamily. In terms of assembly, interacts with CD4. Interacts with ALDH16A1. As to expression, expressed in cell lines FT.1 and in a L cell fibroblast derivative (at protein level).

It localises to the cytoplasm. Its function is as follows. May play a role as a negative regulatory factor in CD4-dependent T-cell activation. The chain is Maspardin (Spg21) from Mus musculus (Mouse).